The primary structure comprises 487 residues: Neuronal immunoglobulin domain-containing protein rig-3 (487 aa).

An N-terminal signal peptide occupies residues 1–23; it reads MGRLLAKMLFPLAMCLFVSAVSA. 2 consecutive Ig-like domains span residues 34 to 139 and 247 to 354; these read PIVI…KTIK and PEFE…PKVT. Cystine bridges form between cysteine 61–cysteine 124 and cysteine 271–cysteine 327. A lipid anchor (GPI-anchor amidated aspartate) is attached at aspartate 466. Residues 467–487 constitute a propeptide, removed in mature form; it reads SASDSKFPLALATLFFVCLFI.

As to expression, expressed in the cholinergic motor neurons AS, VA and DA in the ventral nerve cord and in the mechanosensory ALM neurons in the midbody.

It is found in the cell projection. The protein resides in the axon. The protein localises to the synapse. Its subcellular location is the cell membrane. Functionally, cell surface protein which plays a role in the plasticity of cholinergic synapses at neuromuscular junctions and in the polarity of the mechanosensory neuron ALM, possibly by antagonizing Wnt signaling. The protein is Neuronal immunoglobulin domain-containing protein rig-3 of Caenorhabditis elegans.